A 634-amino-acid polypeptide reads, in one-letter code: Chaperone protein dnaK2 (634 aa).

The residue at position 197 (T197) is a Phosphothreonine; by autocatalysis. The span at 601–620 shows a compositional bias: low complexity; sequence SAEASANAQAGPSSSSSSSS. The tract at residues 601 to 634 is disordered; the sequence is SAEASANAQAGPSSSSSSSSGDDDVIDAEFSESK. The segment covering 621 to 634 has biased composition (acidic residues); sequence GDDDVIDAEFSESK.

Belongs to the heat shock protein 70 family.

Acts as a chaperone. This is Chaperone protein dnaK2 (dnaK2) from Synechococcus elongatus (strain ATCC 33912 / PCC 7942 / FACHB-805) (Anacystis nidulans R2).